A 643-amino-acid polypeptide reads, in one-letter code: Mediator of RNA polymerase II transcription subunit 17 (643 aa).

A disordered region spans residues 53–82 (SDSEEDGAERARAGREQWKQEPEEDEGQLK). The span at 60-73 (AERARAGREQWKQE) shows a compositional bias: basic and acidic residues.

Belongs to the Mediator complex subunit 17 family. In terms of assembly, component of the Mediator complex.

Its subcellular location is the nucleus. Component of the Mediator complex, a coactivator involved in the regulated transcription of nearly all RNA polymerase II-dependent genes. Mediator functions as a bridge to convey information from gene-specific regulatory proteins to the basal RNA polymerase II transcription machinery. Mediator is recruited to promoters by direct interactions with regulatory proteins and serves as a scaffold for the assembly of a functional preinitiation complex with RNA polymerase II and the general transcription factors. In Danio rerio (Zebrafish), this protein is Mediator of RNA polymerase II transcription subunit 17 (med17).